The primary structure comprises 249 residues: Ubiquinone/menaquinone biosynthesis C-methyltransferase UbiE (249 aa).

Residues Thr-72, Asp-93, and 121 to 122 (DA) each bind S-adenosyl-L-methionine.

It belongs to the class I-like SAM-binding methyltransferase superfamily. MenG/UbiE family.

The enzyme catalyses a 2-demethylmenaquinol + S-adenosyl-L-methionine = a menaquinol + S-adenosyl-L-homocysteine + H(+). It carries out the reaction a 2-methoxy-6-(all-trans-polyprenyl)benzene-1,4-diol + S-adenosyl-L-methionine = a 5-methoxy-2-methyl-3-(all-trans-polyprenyl)benzene-1,4-diol + S-adenosyl-L-homocysteine + H(+). It functions in the pathway quinol/quinone metabolism; menaquinone biosynthesis; menaquinol from 1,4-dihydroxy-2-naphthoate: step 2/2. The protein operates within cofactor biosynthesis; ubiquinone biosynthesis. Its function is as follows. Methyltransferase required for the conversion of demethylmenaquinol (DMKH2) to menaquinol (MKH2) and the conversion of 2-polyprenyl-6-methoxy-1,4-benzoquinol (DDMQH2) to 2-polyprenyl-3-methyl-6-methoxy-1,4-benzoquinol (DMQH2). The chain is Ubiquinone/menaquinone biosynthesis C-methyltransferase UbiE from Saccharophagus degradans (strain 2-40 / ATCC 43961 / DSM 17024).